The primary structure comprises 214 residues: ATP phosphoribosyltransferase (214 aa).

Belongs to the ATP phosphoribosyltransferase family. Short subfamily. As to quaternary structure, heteromultimer composed of HisG and HisZ subunits.

The protein localises to the cytoplasm. It catalyses the reaction 1-(5-phospho-beta-D-ribosyl)-ATP + diphosphate = 5-phospho-alpha-D-ribose 1-diphosphate + ATP. It functions in the pathway amino-acid biosynthesis; L-histidine biosynthesis; L-histidine from 5-phospho-alpha-D-ribose 1-diphosphate: step 1/9. Functionally, catalyzes the condensation of ATP and 5-phosphoribose 1-diphosphate to form N'-(5'-phosphoribosyl)-ATP (PR-ATP). Has a crucial role in the pathway because the rate of histidine biosynthesis seems to be controlled primarily by regulation of HisG enzymatic activity. In Nostoc punctiforme (strain ATCC 29133 / PCC 73102), this protein is ATP phosphoribosyltransferase.